A 91-amino-acid chain; its full sequence is uncharacterized protein (91 aa).

This is an uncharacterized protein from Bacillus anthracis.